Consider the following 206-residue polypeptide: dITP/XTP pyrophosphatase (206 aa).

Substrate is bound at residue S7–K12. Catalysis depends on D70, which acts as the Proton acceptor. Residue D70 coordinates Mg(2+). Substrate is bound by residues T71, F154–D157, K177, and H182–R183.

This sequence belongs to the HAM1 NTPase family. As to quaternary structure, homodimer. The cofactor is Mg(2+).

The catalysed reaction is XTP + H2O = XMP + diphosphate + H(+). The enzyme catalyses dITP + H2O = dIMP + diphosphate + H(+). It carries out the reaction ITP + H2O = IMP + diphosphate + H(+). Its function is as follows. Pyrophosphatase that catalyzes the hydrolysis of nucleoside triphosphates to their monophosphate derivatives, with a high preference for the non-canonical purine nucleotides XTP (xanthosine triphosphate), dITP (deoxyinosine triphosphate) and ITP. Seems to function as a house-cleaning enzyme that removes non-canonical purine nucleotides from the nucleotide pool, thus preventing their incorporation into DNA/RNA and avoiding chromosomal lesions. This chain is dITP/XTP pyrophosphatase, found in Chlamydia abortus (strain DSM 27085 / S26/3) (Chlamydophila abortus).